Consider the following 196-residue polypeptide: Probable GTP-binding protein EngB (196 aa).

The region spanning 22 to 195 (NIPEIALVGR…WQWIEERMGK (174 aa)) is the EngB-type G domain. GTP is bound by residues 30 to 37 (GRSNVGKS), 57 to 61 (GKTQT), 75 to 78 (DVPG), 142 to 145 (TKID), and 174 to 176 (FSA). Mg(2+) is bound by residues serine 37 and threonine 59.

This sequence belongs to the TRAFAC class TrmE-Era-EngA-EngB-Septin-like GTPase superfamily. EngB GTPase family. Requires Mg(2+) as cofactor.

Functionally, necessary for normal cell division and for the maintenance of normal septation. The chain is Probable GTP-binding protein EngB from Limosilactobacillus reuteri (strain DSM 20016) (Lactobacillus reuteri).